The chain runs to 938 residues: Isoleucine--tRNA ligase (938 aa).

The 'HIGH' region motif lies at 58-68 (PYANGSIHIGH). Position 183 is an N6-acetyllysine (Lys-183). Glu-561 contributes to the L-isoleucyl-5'-AMP binding site. Positions 602–606 (KMSKS) match the 'KMSKS' region motif. Lys-605 is a binding site for ATP. 4 residues coordinate Zn(2+): Cys-901, Cys-904, Cys-921, and Cys-924.

It belongs to the class-I aminoacyl-tRNA synthetase family. IleS type 1 subfamily. Monomer. Zn(2+) serves as cofactor.

The protein localises to the cytoplasm. The catalysed reaction is tRNA(Ile) + L-isoleucine + ATP = L-isoleucyl-tRNA(Ile) + AMP + diphosphate. In terms of biological role, catalyzes the attachment of isoleucine to tRNA(Ile). As IleRS can inadvertently accommodate and process structurally similar amino acids such as valine, to avoid such errors it has two additional distinct tRNA(Ile)-dependent editing activities. One activity is designated as 'pretransfer' editing and involves the hydrolysis of activated Val-AMP. The other activity is designated 'posttransfer' editing and involves deacylation of mischarged Val-tRNA(Ile). The protein is Isoleucine--tRNA ligase of Escherichia fergusonii (strain ATCC 35469 / DSM 13698 / CCUG 18766 / IAM 14443 / JCM 21226 / LMG 7866 / NBRC 102419 / NCTC 12128 / CDC 0568-73).